The following is a 149-amino-acid chain: Nucleoside diphosphate kinase 1 (149 aa).

6 residues coordinate ATP: lysine 9, phenylalanine 57, arginine 85, threonine 91, arginine 102, and asparagine 112. Catalysis depends on histidine 115, which acts as the Pros-phosphohistidine intermediate.

The protein belongs to the NDK family. As to quaternary structure, homohexamer. Can also form dodecamers. It depends on Mg(2+) as a cofactor.

The protein localises to the nucleus. The catalysed reaction is a 2'-deoxyribonucleoside 5'-diphosphate + ATP = a 2'-deoxyribonucleoside 5'-triphosphate + ADP. It carries out the reaction a ribonucleoside 5'-diphosphate + ATP = a ribonucleoside 5'-triphosphate + ADP. Major role in the synthesis of nucleoside triphosphates other than ATP. The ATP gamma phosphate is transferred to the NDP beta phosphate via a ping-pong mechanism, using a phosphorylated active-site intermediate. Involved in transcription regulation. Has G-quadruplex (G4) DNA-binding activity, which is independent of its nucleotide-binding and kinase activity. Binds folded G4 with low nanomolar affinity and corresponding unfolded G-rich DNA more weakly. Stabilizes folded G4s regardless of whether they are prefolded or not. This chain is Nucleoside diphosphate kinase 1, found in Zea mays (Maize).